Reading from the N-terminus, the 182-residue chain is SAGA-associated factor 11 homolog (182 aa).

The disordered stretch occupies residues Gly61 to Thr84. The SGF11-type zinc finger occupies Cys98–Cys119. A disordered region spans residues Arg133–Ser182. Positions Gly148 to Trp158 are enriched in acidic residues.

It belongs to the SGF11 family. Component of some SAGA transcription coactivator-HAT complexes. Within the SAGA complex, participates in a subcomplex of SAGA called the DUB module (deubiquitination module).

The protein resides in the nucleus. Functionally, component of the transcription regulatory histone acetylation (HAT) complex SAGA, a multiprotein complex that activates transcription by remodeling chromatin and mediating histone acetylation and deubiquitination. Within the SAGA complex, participates in a subcomplex that specifically deubiquitinates histone H2B. The SAGA complex is recruited to specific gene promoters by activators, where it is required for transcription. This Anopheles gambiae (African malaria mosquito) protein is SAGA-associated factor 11 homolog.